The chain runs to 277 residues: Undecaprenyl-diphosphatase (277 aa).

7 consecutive transmembrane segments (helical) span residues 3–23 (YIIE…TEIF), 48–68 (LTLF…IYYF), 97–117 (ISYA…GLLI), 125–145 (LLSI…VFLL), 198–218 (SFLC…YDAI), 227–247 (IPGF…TIKI), and 257–277 (LIWF…LYII).

The protein belongs to the UppP family.

The protein localises to the cell membrane. It carries out the reaction di-trans,octa-cis-undecaprenyl diphosphate + H2O = di-trans,octa-cis-undecaprenyl phosphate + phosphate + H(+). Its function is as follows. Catalyzes the dephosphorylation of undecaprenyl diphosphate (UPP). Confers resistance to bacitracin. The polypeptide is Undecaprenyl-diphosphatase (Acholeplasma laidlawii (strain PG-8A)).